The chain runs to 1509 residues: ABC transporter G family member 38 (1509 aa).

Positions 196–467 constitute an ABC transporter 1 domain; it reads LGLVGLNFAK…FERCGFRCPE (272 aa). 229 to 236 lines the ATP pocket; it reads GPPSSGKT. The ABC transmembrane type-2 1 domain maps to 545–758; the sequence is ELLKTSCSKE…AYIAFSSNEM (214 aa). 7 helical membrane-spanning segments follow: residues 563–583, 598–618, 651–671, 682–702, 707–727, 733–753, and 791–811; these read FVYI…STVF, IYIG…FADL, IPSS…TMGF, LLVV…TAGL, VVTN…GGFI, IPKW…YIAF, and YWIA…LFSL. Residues 908–1160 form the ABC transporter 2 domain; sequence MSFNEINYYV…KVVEYFEAIP (253 aa). 953–960 is a binding site for ATP; the sequence is GVSGAGKT. Positions 1233–1447 constitute an ABC transmembrane type-2 2 domain; that stretch reads NQFKLCLWKQ…TVYGLIVSQY (215 aa). A run of 7 helical transmembrane segments spans residues 1252–1272, 1284–1304, 1336–1356, 1367–1387, 1397–1417, 1425–1445, and 1478–1498; these read YNLV…TIFW, LLVI…ENSV, VVVE…IVYP, FFWF…YGMM, VASI…GFFI, WWVW…LIVS, and FMGV…FTYA.

It belongs to the ABC transporter superfamily. ABCG family. PDR (TC 3.A.1.205) subfamily.

It localises to the membrane. May be a general defense protein. In Oryza sativa subsp. japonica (Rice), this protein is ABC transporter G family member 38.